A 273-amino-acid polypeptide reads, in one-letter code: Glucosamine-6-phosphate deaminase (273 aa).

D72 functions as the Proton acceptor; for enolization step in the catalytic mechanism. Residue D141 is the For ring-opening step of the active site. Catalysis depends on H143, which acts as the Proton acceptor; for ring-opening step. E148 functions as the For ring-opening step in the catalytic mechanism.

This sequence belongs to the glucosamine/galactosamine-6-phosphate isomerase family. In terms of assembly, homohexamer.

The protein localises to the cytoplasm. The catalysed reaction is alpha-D-glucosamine 6-phosphate + H2O = beta-D-fructose 6-phosphate + NH4(+). It functions in the pathway nucleotide-sugar biosynthesis; UDP-N-acetyl-alpha-D-glucosamine biosynthesis; alpha-D-glucosamine 6-phosphate from D-fructose 6-phosphate: step 1/1. Catalyzes the reversible conversion of alpha-D-glucosamine 6-phosphate (GlcN-6P) into beta-D-fructose 6-phosphate (Fru-6P) and ammonium ion, a regulatory reaction step in de novo uridine diphosphate-N-acetyl-alpha-D-glucosamine (UDP-GlcNAc) biosynthesis via hexosamine pathway. The protein is Glucosamine-6-phosphate deaminase (Gnpda1) of Anopheles gambiae (African malaria mosquito).